The following is a 284-amino-acid chain: NADH-cytochrome b5 reductase 1 (284 aa).

Residues 7 to 27 (KLVVVIVIVVVPLLFKFIIGP) form a helical membrane-spanning segment. The FAD-binding FR-type domain maps to 38 to 142 (NDFQSFPLVE…KGPRGNYHYE (105 aa)). Residues 122–137 (GELK…GPRG) and 148–180 (HLGM…KVSL) contribute to the FAD site.

The protein belongs to the flavoprotein pyridine nucleotide cytochrome reductase family. Monomer. Component of the 2-(3-amino-3-carboxypropyl)histidine synthase complex composed of DPH1, DPH2, KTI11/DPH3 and a NADH-dependent reductase, predominantly CBR1. Interacts with KTI11/DPH3. Interacts with STE20. Requires FAD as cofactor.

The protein localises to the mitochondrion outer membrane. It catalyses the reaction 2 Fe(III)-[cytochrome b5] + NADH = 2 Fe(II)-[cytochrome b5] + NAD(+) + H(+). The catalysed reaction is 2 Fe(3+)-[Dph3] + NADH = 2 Fe(2+)-[Dph3] + NAD(+) + H(+). The protein operates within protein modification; peptidyl-diphthamide biosynthesis. With respect to regulation, competitively inhibited by NAD(+). Inhibited by mercurials such as p-chloromercuribenzoate (PCMB) and HgCl(2). Enzymatic activity increases under anaerobic conditions. NADH-dependent reductase for KTI11/DPH3 and cytochrome b5. Required for the first step of diphthamide biosynthesis, a post-translational modification of histidine which occurs in elongation factor 2. DPH1 and DPH2 transfer a 3-amino-3-carboxypropyl (ACP) group from S-adenosyl-L-methionine (SAM) to a histidine residue, the reaction is assisted by a reduction system comprising KTI11/DPH3 and a NADH-dependent reductase, predominantly CBR1. By reducing KTI11/DPH3, also involved in the formation of the tRNA wobble base modification mcm5s 2U (5-methoxycarbonylmethyl-2-thiouridine), mediated by the elongator complex. The cytochrome b5/NADH cytochrome b5 reductase electron transfer system supports the catalytic activity of several sterol biosynthetic enzymes. Plays a role in bud morphology. In Saccharomyces cerevisiae (strain ATCC 204508 / S288c) (Baker's yeast), this protein is NADH-cytochrome b5 reductase 1 (CBR1).